The primary structure comprises 530 residues: PTS system maltose-specific EIICB component (530 aa).

The PTS EIIC type-1 domain occupies 1–431 (MTAKTAPKVT…FNLKTPGRDS (431 aa)). 10 helical membrane passes run 22–42 (FMLPVALLSFCGIMLGIGSSL), 69–89 (IGSFAFSFLPVMFCIAIPLGL), 96–116 (VAAFAGFIGYAVMNLAVNFWL), 138–158 (ILGIQSIDTGILGAVIAGIIV), 189–209 (LVMGLVGLVIPLVWPIFAMGI), 289–309 (FLSQGKMPAFLGGLPGAALAM), 321–341 (IKGLLISGLIACVVGGTTEPL), 343–363 (FLFLFVAPVLYVIHALLTGLG), 369–389 (VLGVTIGNTDGNIIDFVVFGI), and 399–419 (MVPVVAAIWFVVYYVIFRFAI). The PTS EIIB type-1 domain occupies 449–530 (GYNVPAILEA…MAGLMHTVQA (82 aa)). The Phosphocysteine intermediate; for EIIB activity role is filled by Cys471.

The protein localises to the cell inner membrane. It catalyses the reaction D-maltose(out) + N(pros)-phospho-L-histidyl-[protein] = alpha-maltose 6'-phosphate(in) + L-histidyl-[protein]. In terms of biological role, the phosphoenolpyruvate-dependent sugar phosphotransferase system (sugar PTS), a major carbohydrate active transport system, catalyzes the phosphorylation of incoming sugar substrates concomitantly with their translocation across the cell membrane. This system is involved in maltose transport. MalX can also recognize and transport glucose even though this sugar may not represent the natural substrate of the system. The protein is PTS system maltose-specific EIICB component of Escherichia coli (strain K12).